Here is a 228-residue protein sequence, read N- to C-terminus: Urease accessory protein UreE (228 aa).

The interval 188 to 228 is disordered; that stretch reads PLDEPHGSGLHIHAIHSHGDGHSHDHDHSHSHGDHDHDHKH. Basic and acidic residues predominate over residues 204 to 228; the sequence is SHGDGHSHDHDHSHSHGDHDHDHKH.

The protein belongs to the UreE family.

It is found in the cytoplasm. Functionally, involved in urease metallocenter assembly. Binds nickel. Probably functions as a nickel donor during metallocenter assembly. The sequence is that of Urease accessory protein UreE from Yersinia kristensenii.